Reading from the N-terminus, the 419-residue chain is Queuine tRNA-ribosyltransferase accessory subunit 2 (419 aa).

The Zn(2+) site is built by cysteine 326, cysteine 328, cysteine 331, and histidine 357.

This sequence belongs to the queuine tRNA-ribosyltransferase family. QTRT2 subfamily. Heterodimer of a catalytic subunit and an accessory subunit. The cofactor is Zn(2+).

It localises to the cytoplasm. Its function is as follows. Non-catalytic subunit of the queuine tRNA-ribosyltransferase (TGT) that catalyzes the base-exchange of a guanine (G) residue with queuine (Q) at position 34 (anticodon wobble position) in tRNAs with GU(N) anticodons (tRNA-Asp, -Asn, -His and -Tyr), resulting in the hypermodified nucleoside queuosine (7-(((4,5-cis-dihydroxy-2-cyclopenten-1-yl)amino)methyl)-7-deazaguanosine). This Drosophila grimshawi (Hawaiian fruit fly) protein is Queuine tRNA-ribosyltransferase accessory subunit 2.